The sequence spans 326 residues: ELAV-like protein 1 (326 aa).

At serine 2 the chain carries N-acetylserine. The residue at position 2 (serine 2) is a Phosphoserine. The 79-residue stretch at 20-98 (TNLIVNYLPQ…KTIKVSYARP (79 aa)) folds into the RRM 1 domain. Residues serine 100 and serine 158 each carry the phosphoserine modification. Residues 106-186 (ANLYISGLPR…EPITVKFAAN (81 aa)) form the RRM 2 domain. Lysine 191 is covalently cross-linked (Glycyl lysine isopeptide (Lys-Gly) (interchain with G-Cter in SUMO2)). Residues serine 197 and serine 202 each carry the phosphoserine modification. Arginine 206 carries the omega-N-methylarginine modification. The residue at position 217 (arginine 217) is an Asymmetric dimethylarginine; by CARM1; alternate. Arginine 217 bears the Omega-N-methylarginine; alternate mark. Phosphoserine occurs at positions 221 and 318. In terms of domain architecture, RRM 3 spans 244–322 (WCIFIYNLGQ…KILQVSFKTN (79 aa)).

Belongs to the RRM elav family. Monomer and homodimer (in vitro). Interacts with ANP32A. Interacts with ZNF385A; the interaction is indirect and mRNA-dependent and may regulate p53/TP53 expression. Identified in a mRNP complex, at least composed of DHX9, DDX3X, ELAVL1, HNRNPU, IGF2BP1, ILF3, PABPC1, PCBP2, PTBP2, STAU1, STAU2, SYNCRIP and YBX1. Interacts with AGO1 and AGO2. Interacts with IGF2BP1; the interaction is enhanced by SEPIN14P20 peptide RBPR. Interacts with IGF2BP2 and IGF2BP3. Interacts with HNRNPL. Interacts with DHX36; this interaction occurs in a RNA-dependent manner. Interacts with ILF3; this interaction occurs in a RNA-dependent manner. Interacts with PLEKHN1. Interacts with SHFL; the interaction increases in presence of RNA. Interacts with YBX1; interaction recruits ELAVL1 on C5-methylcytosine (m5C)-containing mRNAs, thereby promoting mRNA stability. Interacts with FXR1. Post-translationally, phosphorylated by MAPKAPK2. Phosphorylated by PRKCD. In terms of processing, methylated at Arg-217 by CARM1 in macrophages in response to LPS challenge. Ubiquitous. Detected in brain, liver, thymus and muscle.

The protein resides in the cytoplasm. The protein localises to the nucleus. It localises to the stress granule. Its subcellular location is the P-body. RNA-binding protein that binds to the 3'-UTR region of mRNAs and increases their stability. Involved in embryonic stem cell (ESC) differentiation: preferentially binds mRNAs that are not methylated by N6-methyladenosine (m6A), stabilizing them, promoting ESC differentiation. Has also been shown to be capable of binding to m6A-containing mRNAs and contributes to MYC stability by binding to m6A-containing MYC mRNAs. Binds to poly-U elements and AU-rich elements (AREs) in the 3'-UTR of target mRNAs. Binds avidly to the AU-rich element in FOS and IL3/interleukin-3 mRNAs. In the case of the FOS AU-rich element, binds to a core element of 27 nucleotides that contain AUUUA, AUUUUA, and AUUUUUA motifs. Binds preferentially to the 5'-UUUU[AG]UUU-3' motif in vitro. With ZNF385A, binds the 3'-UTR of p53/TP53 mRNA to control their nuclear export induced by CDKN2A. Hence, may regulate p53/TP53 expression and mediate in part the CDKN2A anti-proliferative activity. May also bind with ZNF385A the CCNB1 mRNA. Increases the stability of the leptin mRNA harboring an AU-rich element (ARE) in its 3' UTR. This is ELAV-like protein 1 (ELAVL1) from Homo sapiens (Human).